The primary structure comprises 286 residues: Putative sugar uptake protein lin0215 (286 aa).

Transmembrane regions (helical) follow at residues 4 to 26, 33 to 55, 114 to 136, 149 to 167, 177 to 194, 207 to 226, 230 to 252, and 264 to 283; these read MIALIPALLWGTVPLIITKFGGS, GMTLGALTFAVIVFFFTDPVYTL, LRIILGFIALALIVGGIFLTSYA, GLITLVISSLGYVGLVVLI, AILPQAIGMVLSALIMTH, LLLIIPGMIWAAGNVAMVHA, VGVATGFSLSQLGVVISTIGGIV, and LYVIVGVVLVVLGGILIGVA.

The protein belongs to the GRP transporter (TC 2.A.7.5) family.

Its subcellular location is the cell membrane. The protein is Putative sugar uptake protein lin0215 of Listeria innocua serovar 6a (strain ATCC BAA-680 / CLIP 11262).